The following is a 590-amino-acid chain: Enhancer of polycomb-like protein 1 (590 aa).

Disordered stretches follow at residues 302–335 (DEDL…PVRS) and 471–497 (TPPR…EPPV). A compositionally biased stretch (basic and acidic residues) spans 475 to 488 (ELGEDRSDRWKYDS).

It belongs to the enhancer of polycomb family. Component of the NuA4 histone acetyltransferase complex.

It is found in the nucleus. Component of the NuA4 histone acetyltransferase complex which is involved in transcriptional activation of selected genes principally by acetylation of nucleosomal histone H4 and H2A. The NuA4 complex is also involved in DNA repair. Involved in gene silencing by neighboring heterochromatin, blockage of the silencing spreading along the chromosome, and required for cell cycle progression through G2/M. The sequence is that of Enhancer of polycomb-like protein 1 (EPL1) from Gibberella zeae (strain ATCC MYA-4620 / CBS 123657 / FGSC 9075 / NRRL 31084 / PH-1) (Wheat head blight fungus).